A 447-amino-acid polypeptide reads, in one-letter code: Methylenetetrahydrofolate--tRNA-(uracil-5-)-methyltransferase TrmFO (447 aa).

An FAD-binding site is contributed by 9-14 (GGGLAG).

Belongs to the MnmG family. TrmFO subfamily. FAD is required as a cofactor.

Its subcellular location is the cytoplasm. The catalysed reaction is uridine(54) in tRNA + (6R)-5,10-methylene-5,6,7,8-tetrahydrofolate + NADH + H(+) = 5-methyluridine(54) in tRNA + (6S)-5,6,7,8-tetrahydrofolate + NAD(+). The enzyme catalyses uridine(54) in tRNA + (6R)-5,10-methylene-5,6,7,8-tetrahydrofolate + NADPH + H(+) = 5-methyluridine(54) in tRNA + (6S)-5,6,7,8-tetrahydrofolate + NADP(+). In terms of biological role, catalyzes the folate-dependent formation of 5-methyl-uridine at position 54 (M-5-U54) in all tRNAs. The chain is Methylenetetrahydrofolate--tRNA-(uracil-5-)-methyltransferase TrmFO from Paramagnetospirillum magneticum (strain ATCC 700264 / AMB-1) (Magnetospirillum magneticum).